A 227-amino-acid chain; its full sequence is Isopentenyl-diphosphate Delta-isomerase 1 (227 aa).

Substrate is bound at residue Lys36. Residues His40 and His51 each coordinate Mg(2+). Residues 49–199 (LLHRAFSVFL…EVKLTPWFKI (151 aa)) enclose the Nudix hydrolase domain. Arg70 and Lys74 together coordinate substrate. The active site involves Cys86. Ser87 is a substrate binding site. 2 residues coordinate Mg(2+): Glu146 and Glu148. Glu148 is an active-site residue. Residue Lys176 is modified to N6-acetyllysine. The Microbody targeting signal signature appears at 225-227 (HRM).

It belongs to the IPP isomerase type 1 family. As to quaternary structure, monomer. Requires Mg(2+) as cofactor.

The protein localises to the peroxisome. It carries out the reaction isopentenyl diphosphate = dimethylallyl diphosphate. Its pathway is isoprenoid biosynthesis; dimethylallyl diphosphate biosynthesis; dimethylallyl diphosphate from isopentenyl diphosphate: step 1/1. Its function is as follows. Catalyzes the 1,3-allylic rearrangement of the homoallylic substrate isopentenyl (IPP) to its highly electrophilic allylic isomer, dimethylallyl diphosphate (DMAPP). The protein is Isopentenyl-diphosphate Delta-isomerase 1 (IDI1) of Mesocricetus auratus (Golden hamster).